A 166-amino-acid polypeptide reads, in one-letter code: Large ribosomal subunit protein bL9 (166 aa).

Belongs to the bacterial ribosomal protein bL9 family.

Binds to the 23S rRNA. The chain is Large ribosomal subunit protein bL9 from Borrelia garinii subsp. bavariensis (strain ATCC BAA-2496 / DSM 23469 / PBi) (Borreliella bavariensis).